Reading from the N-terminus, the 327-residue chain is Probable cytosolic iron-sulfur protein assembly protein CIAO1 homolog (327 aa).

WD repeat units lie at residues 3 to 42, 48 to 87, 92 to 131, 137 to 176, 181 to 220, 239 to 278, and 290 to 327; these read GHED…WICK, GHQR…FECN, GHEN…EYEC, SHTQ…WSCC, GHES…NQEG, YHDR…DRNQ, and AHSM…PAEE.

This sequence belongs to the WD repeat CIA1 family.

Functionally, essential component of the cytosolic iron-sulfur (Fe/S) protein assembly machinery. Required for the maturation of extramitochondrial Fe/S proteins. This is Probable cytosolic iron-sulfur protein assembly protein CIAO1 homolog from Nematostella vectensis (Starlet sea anemone).